Reading from the N-terminus, the 201-residue chain is Prostamide/prostaglandin F synthase (201 aa).

The protein belongs to the peroxiredoxin-like PRXL2 family. Prostamide/prostaglandin F synthase subfamily.

Its subcellular location is the cytoplasm. It localises to the cytosol. It carries out the reaction prostaglandin H2 + [thioredoxin]-dithiol = prostaglandin F2alpha + [thioredoxin]-disulfide. The enzyme catalyses prostamide F2alpha + [thioredoxin]-disulfide = prostamide H2 + [thioredoxin]-dithiol. In terms of biological role, catalyzes the reduction of prostaglandin-ethanolamide H(2) (prostamide H(2)) to prostamide F(2alpha) with NADPH as proton donor. Also able to reduce prostaglandin H(2) to prostaglandin F(2alpha). The sequence is that of Prostamide/prostaglandin F synthase (prxl2b) from Danio rerio (Zebrafish).